The following is a 150-amino-acid chain: Seminal ribonuclease (150 aa).

The first 26 residues, 1-26 (MALKSLVVLPLLVLVLLLVRVQPSLG), serve as a signal peptide directing secretion. Residues lysine 33 and arginine 36 each contribute to the substrate site. Histidine 38 functions as the Proton acceptor in the catalytic mechanism. Intrachain disulfides connect cysteine 52–cysteine 110, cysteine 66–cysteine 121, cysteine 84–cysteine 136, and cysteine 91–cysteine 98. Substrate contacts are provided by residues 67-71 (KPVNT) and lysine 92. Asparagine 93 is modified (deamidated asparagine; by deterioration). Residue arginine 111 participates in substrate binding. Residue histidine 145 is the Proton donor of the active site.

This sequence belongs to the pancreatic ribonuclease family. Homodimer; disulfide-linked. As to expression, seminal plasma. Can reach 3% of the protein content of this fluid.

The protein resides in the secreted. It carries out the reaction an [RNA] containing cytidine + H2O = an [RNA]-3'-cytidine-3'-phosphate + a 5'-hydroxy-ribonucleotide-3'-[RNA].. The catalysed reaction is an [RNA] containing uridine + H2O = an [RNA]-3'-uridine-3'-phosphate + a 5'-hydroxy-ribonucleotide-3'-[RNA].. Allosteric regulation by both substrate and reaction products. In terms of biological role, this enzyme hydrolyzes both single- and double-stranded RNA. The sequence is that of Seminal ribonuclease (SRN) from Bos taurus (Bovine).